Here is a 397-residue protein sequence, read N- to C-terminus: MASLAVSINQFAVEFSKKLAESAEGRNIFFSPWGISTSLAMVYLGTKGTTAAQMSQVLHFGSIQDFKFGPDSEKKRKMECHSGKSEEMQSDFQTLTAKILKHGNSYVLKIANRIYVEKTYLFHNKYLEDMKTYFGAEPQSVNFVEASGQIRKEINSWVGSQTGDKIPNLLPDDAVDNKTTMVLVNALYFKGTWEHQFSVQNTTERPFRINKTTSKPVQMMSMKQSLQVFHIEELQTIGVQLHYQNREFSLLLLLPEEVEGLKQLERAITYEKLDKWTSADMMDTYEVRLYLPKFKMEESYDLQSALRDMGMTDAFNQGKANFSNMTSERNLFLSNVFHKTFLEINEEGTEAAAGTGSEVNFRIKAPSIELNADHPFLFLIRHNVTNTILFDGRFYSP.

Residues 74 to 77 (KKRK) carry the Nuclear localization signal motif.

Belongs to the serpin family. Ov-serpin subfamily. In terms of tissue distribution, expressed in many tissues, including brain, heart, kidney, liver, lung, prostate, skin, spleen and stomach.

The protein localises to the nucleus. It localises to the cytoplasm. Protease inhibitor that may play a role in the regulation of protease activities during hematopoiesis and apoptosis induced by TNF. May regulate protease activities in the cytoplasm and in the nucleus. Inhibits plasmin. In Rattus norvegicus (Rat), this protein is Serpin B10 (Serpinb10).